A 443-amino-acid polypeptide reads, in one-letter code: Xaa-Pro dipeptidase (443 aa).

The Mn(2+) site is built by Asp246, Asp257, His339, Glu384, and Glu423.

The protein belongs to the peptidase M24B family. Bacterial-type prolidase subfamily. Requires Mn(2+) as cofactor.

The enzyme catalyses Xaa-L-Pro dipeptide + H2O = an L-alpha-amino acid + L-proline. In terms of biological role, splits dipeptides with a prolyl residue in the C-terminal position. This is Xaa-Pro dipeptidase from Pectobacterium atrosepticum (strain SCRI 1043 / ATCC BAA-672) (Erwinia carotovora subsp. atroseptica).